A 158-amino-acid chain; its full sequence is NAD(P)H-quinone oxidoreductase subunit J, chloroplastic (158 aa).

It belongs to the complex I 30 kDa subunit family. NDH is composed of at least 16 different subunits, 5 of which are encoded in the nucleus.

Its subcellular location is the plastid. The protein localises to the chloroplast thylakoid membrane. The enzyme catalyses a plastoquinone + NADH + (n+1) H(+)(in) = a plastoquinol + NAD(+) + n H(+)(out). It carries out the reaction a plastoquinone + NADPH + (n+1) H(+)(in) = a plastoquinol + NADP(+) + n H(+)(out). In terms of biological role, NDH shuttles electrons from NAD(P)H:plastoquinone, via FMN and iron-sulfur (Fe-S) centers, to quinones in the photosynthetic chain and possibly in a chloroplast respiratory chain. The immediate electron acceptor for the enzyme in this species is believed to be plastoquinone. Couples the redox reaction to proton translocation, and thus conserves the redox energy in a proton gradient. This Arabis hirsuta (Hairy rock-cress) protein is NAD(P)H-quinone oxidoreductase subunit J, chloroplastic.